Here is a 422-residue protein sequence, read N- to C-terminus: Phospholipase D Z (422 aa).

The N-terminal stretch at methionine 1 to serine 18 is a signal peptide. N-linked (GlcNAc...) asparagine glycosylation is present at asparagine 53. Residues glycine 148–serine 175 enclose the PLD phosphodiesterase 1 domain. Active-site residues include histidine 153, lysine 155, and aspartate 160. N-linked (GlcNAc...) asparagine glycans are attached at residues asparagine 225 and asparagine 320. The 27-residue stretch at phenylalanine 357–tyrosine 383 folds into the PLD phosphodiesterase 2 domain. Active-site residues include histidine 362, lysine 364, and aspartate 369. An N-linked (GlcNAc...) asparagine glycan is attached at asparagine 378.

It belongs to the phospholipase D family.

It carries out the reaction a 1,2-diacyl-sn-glycero-3-phosphocholine + H2O = a 1,2-diacyl-sn-glycero-3-phosphate + choline + H(+). With respect to regulation, inhibited by butan-1-ol. In terms of biological role, hydrolyzes membrane phospholipids, such as PtdCho (phosphatidylcholine), producing the free headgroup and PtdOH (phosphatidic acid; signaling molecule on its own). The sequence is that of Phospholipase D Z (pldZ) from Dictyostelium discoideum (Social amoeba).